Here is a 708-residue protein sequence, read N- to C-terminus: Protein psiF (708 aa).

The N-terminal stretch at 1 to 19 is a signal peptide; sequence MKYLFIAIILILYCSFTKA. Over 20–643 the chain is Extracellular; that stretch reads DQKKFLVNMY…QSTAVKVGVG (624 aa). Residues Asn-78, Asn-116, Asn-222, Asn-317, Asn-318, Asn-371, Asn-498, and Asn-600 are each glycosylated (N-linked (GlcNAc...) asparagine). Residues 103–263 form the PA14 domain; it reads TQTAGSQNYY…YDYCGICNGK (161 aa). The chain crosses the membrane as a helical span at residues 644 to 664; it reads IGAAAAAGIAIGGAVAAGLAI. Over 665–708 the chain is Cytoplasmic; the sequence is FGGKKAYDTWKTSRGNVMTGSQSNPLYTQNQNNGNNPLYSAPAE. The segment covering 682 to 702 has biased composition (polar residues); it reads MTGSQSNPLYTQNQNNGNNPL. The segment at 682 to 708 is disordered; sequence MTGSQSNPLYTQNQNNGNNPLYSAPAE.

The protein belongs to the prespore-cell-inducing factor family. In terms of assembly, forms a complex with dicB.

The protein localises to the membrane. Its subcellular location is the secreted. Acts as a quorum sensing protein regulating discoidin gene expression during growth and development. D.discoideum is a single-celled amoebae and switches to multicellular development when food becomes limited. As the growing cells reach a high density, they begin expressing discoidin genes. The ability of psiF/dicA to induce discoidin gene expression when present in conditioned medium, suggests that it allows cells to sense their local density. The chain is Protein psiF (psiF) from Dictyostelium discoideum (Social amoeba).